The chain runs to 417 residues: Proteasome-activating nucleotidase (417 aa).

Positions 24-78 form a coiled coil; the sequence is SKYLLDRVKQLEERNVRLKEEYRKIELEKKSVENKKVQYEREIRKLTSELDRLKT. Residues 203–208 and H342 each bind ATP; that span reads GTGKTL. The tract at residues 415–417 is docks into pockets in the proteasome alpha-ring to cause gate opening; that stretch reads MFA.

The protein belongs to the AAA ATPase family. As to quaternary structure, homohexamer. The hexameric complex has a two-ring architecture resembling a top hat that caps the 20S proteasome core at one or both ends. Upon ATP-binding, the C-terminus of PAN interacts with the alpha-rings of the proteasome core by binding to the intersubunit pockets.

Its subcellular location is the cytoplasm. In terms of biological role, ATPase which is responsible for recognizing, binding, unfolding and translocation of substrate proteins into the archaeal 20S proteasome core particle. Is essential for opening the gate of the 20S proteasome via an interaction with its C-terminus, thereby allowing substrate entry and access to the site of proteolysis. Thus, the C-termini of the proteasomal ATPase function like a 'key in a lock' to induce gate opening and therefore regulate proteolysis. Unfolding activity requires energy from ATP hydrolysis, whereas ATP binding alone promotes ATPase-20S proteasome association which triggers gate opening, and supports translocation of unfolded substrates. The sequence is that of Proteasome-activating nucleotidase from Methanocella arvoryzae (strain DSM 22066 / NBRC 105507 / MRE50).